A 355-amino-acid chain; its full sequence is 45 kDa calcium-binding protein (355 aa).

The N-terminal stretch at 1 to 29 (MASRQAPLCGLAPCCLWLLGVVLLMNASA) is a signal peptide. The N-linked (GlcNAc...) asparagine glycan is linked to asparagine 33. EF-hand domains are found at residues 91–126 (KSRR…KTAE) and 130–165 (EAVA…TKGH). Serine 92 bears the Phosphoserine mark. Ca(2+) contacts are provided by aspartate 104, asparagine 106, aspartate 108, arginine 110, glutamate 115, aspartate 143, aspartate 145, aspartate 147, histidine 149, and glutamate 154. Residues threonine 186 and threonine 210 each carry the phosphothreonine modification. EF-hand domains are found at residues 226 to 261 (MLQF…TVEN), 271 to 306 (WVRD…MNEF), and 307 to 342 (SALN…FTGS). Positions 239, 241, 243, 245, and 250 each coordinate Ca(2+). The residue at position 258 (threonine 258) is a Phosphothreonine. Ca(2+) is bound by residues aspartate 284, asparagine 286, and aspartate 288. Phosphothreonine is present on threonine 292. Ca(2+) is bound by residues glutamate 295, aspartate 320, asparagine 322, asparagine 324, tyrosine 326, and glutamate 331. The necessary for intracellular retention in Golgi apparatus lumen stretch occupies residues 302–355 (PMNEFSALNEAKQMIAIADENQNHYLEPEEVLKYSEFFTGSKLVDYARSVHEEF).

This sequence belongs to the CREC family.

The protein localises to the golgi apparatus lumen. May regulate calcium-dependent activities in the endoplasmic reticulum lumen or post-ER compartment. The polypeptide is 45 kDa calcium-binding protein (SDF4) (Bos taurus (Bovine)).